The primary structure comprises 229 residues: 2-phytyl-1,4-naphtoquinone methyltransferase (229 aa).

This sequence belongs to the class I-like SAM-binding methyltransferase superfamily. MenG/UbiE family.

It carries out the reaction demethylphylloquinol + S-adenosyl-L-methionine = phylloquinol + S-adenosyl-L-homocysteine + H(+). It functions in the pathway cofactor biosynthesis; phylloquinone biosynthesis. Functionally, methyltransferase required for the conversion of 2-phytyl-1,4-beta-naphthoquinol to phylloquinol. This is 2-phytyl-1,4-naphtoquinone methyltransferase from Trichormus variabilis (strain ATCC 29413 / PCC 7937) (Anabaena variabilis).